Consider the following 101-residue polypeptide: MGTRFLLALFLVLLVLGFEVQGAHLPQQEESASPALLTQMQESLSSYWDSAKAAASKLYQKTYLPTVDEKLRDMYSKSTAAMSTYAGILTDQVLSMLKGEE.

The first 22 residues, M1–G22, serve as a signal peptide directing secretion. The lipid binding stretch occupies residues T66–M74. The lipoprotein lipase cofactor stretch occupies residues S78 to E101.

Belongs to the apolipoprotein C2 family. In terms of processing, proapolipoprotein C-II is synthesized as a sialic acid containing glycoprotein which is subsequently desialylated prior to its proteolytic processing. Proapolipoprotein C-II, the major form found in plasma undergoes proteolytic cleavage of its N-terminal hexapeptide to generate apolipoprotein C-II, which occurs as the minor form in plasma.

The protein resides in the secreted. Functionally, component of chylomicrons, very low-density lipoproteins (VLDL), low-density lipoproteins (LDL), and high-density lipoproteins (HDL) in plasma. Plays an important role in lipoprotein metabolism as an activator of lipoprotein lipase. Both proapolipoprotein C-II and apolipoprotein C-II can activate lipoprotein lipase. The polypeptide is Apolipoprotein C-II (APOC2) (Aotus nancymaae (Ma's night monkey)).